The primary structure comprises 523 residues: Arabinose import ATP-binding protein AraG (523 aa).

ABC transporter domains are found at residues 20–255 and 268–511; these read LAFR…MVGR and IGSE…MLRT. Position 52-59 (52-59) interacts with ATP; it reads GENGAGKS.

It belongs to the ABC transporter superfamily. Arabinose importer (TC 3.A.1.2.2) family. The complex is composed of two ATP-binding proteins (AraG), two transmembrane proteins (AraH) and a solute-binding protein (AraF).

Its subcellular location is the cell inner membrane. The catalysed reaction is L-arabinose(out) + ATP + H2O = L-arabinose(in) + ADP + phosphate + H(+). Part of the ABC transporter complex AraFGH involved in arabinose import. Responsible for energy coupling to the transport system. The sequence is that of Arabinose import ATP-binding protein AraG from Yersinia pestis bv. Antiqua (strain Antiqua).